A 357-amino-acid polypeptide reads, in one-letter code: Anthranilate phosphoribosyltransferase (357 aa).

5-phospho-alpha-D-ribose 1-diphosphate-binding positions include G94, 97–98, T102, 104–107, 122–130, and G134; these read GD, NLST, and KHGNRAASS. G94 is an anthranilate binding site. S106 serves as a coordination point for Mg(2+). An anthranilate-binding site is contributed by N125. R180 provides a ligand contact to anthranilate. Mg(2+)-binding residues include D238 and E239.

The protein belongs to the anthranilate phosphoribosyltransferase family. As to quaternary structure, homodimer. Mg(2+) is required as a cofactor.

The enzyme catalyses N-(5-phospho-beta-D-ribosyl)anthranilate + diphosphate = 5-phospho-alpha-D-ribose 1-diphosphate + anthranilate. It participates in amino-acid biosynthesis; L-tryptophan biosynthesis; L-tryptophan from chorismate: step 2/5. Functionally, catalyzes the transfer of the phosphoribosyl group of 5-phosphorylribose-1-pyrophosphate (PRPP) to anthranilate to yield N-(5'-phosphoribosyl)-anthranilate (PRA). This Mycobacterium sp. (strain KMS) protein is Anthranilate phosphoribosyltransferase.